Consider the following 81-residue polypeptide: MAMSLEVFEKLEAKVQQAIDTITLLQMEIEELKEKNNSLAQDVQSAQHQREELERENNHLKEQQSGWQDRLQALLGRMEEV.

Residues 6–80 (EVFEKLEAKV…LQALLGRMEE (75 aa)) are a coiled coil. Positions 38–47 (SLAQDVQSAQ) are enriched in polar residues. Residues 38-67 (SLAQDVQSAQHQREELERENNHLKEQQSGW) form a disordered region. Over residues 48-62 (HQREELERENNHLKE) the composition is skewed to basic and acidic residues.

This sequence belongs to the ZapB family. Homodimer. The ends of the coiled-coil dimer bind to each other, forming polymers. Interacts with FtsZ.

The protein localises to the cytoplasm. Functionally, non-essential, abundant cell division factor that is required for proper Z-ring formation. It is recruited early to the divisome by direct interaction with FtsZ, stimulating Z-ring assembly and thereby promoting cell division earlier in the cell cycle. Its recruitment to the Z-ring requires functional FtsA or ZipA. This is Cell division protein ZapB from Citrobacter koseri (strain ATCC BAA-895 / CDC 4225-83 / SGSC4696).